Here is a 79-residue protein sequence, read N- to C-terminus: Putative defensin-like protein 274 (79 aa).

The N-terminal stretch at 1-23 is a signal peptide; sequence MASSRFQLVALLVVFSLVISITA. 4 disulfides stabilise this stretch: C35–C76, C41–C64, C47–C74, and C51–C75.

This sequence belongs to the DEFL family.

Its subcellular location is the secreted. In Arabidopsis thaliana (Mouse-ear cress), this protein is Putative defensin-like protein 274.